A 484-amino-acid polypeptide reads, in one-letter code: Protein nucleotidyltransferase YdiU (484 aa).

ATP contacts are provided by Gly81, Gly83, Arg84, Lys103, Asp115, Gly116, Arg166, and Arg173. Asp244 serves as the catalytic Proton acceptor. Residues Asn245 and Asp254 each coordinate Mg(2+). Asp254 contributes to the ATP binding site.

This sequence belongs to the SELO family. The cofactor is Mg(2+). Requires Mn(2+) as cofactor.

The enzyme catalyses L-seryl-[protein] + ATP = 3-O-(5'-adenylyl)-L-seryl-[protein] + diphosphate. It catalyses the reaction L-threonyl-[protein] + ATP = 3-O-(5'-adenylyl)-L-threonyl-[protein] + diphosphate. The catalysed reaction is L-tyrosyl-[protein] + ATP = O-(5'-adenylyl)-L-tyrosyl-[protein] + diphosphate. It carries out the reaction L-histidyl-[protein] + UTP = N(tele)-(5'-uridylyl)-L-histidyl-[protein] + diphosphate. The enzyme catalyses L-seryl-[protein] + UTP = O-(5'-uridylyl)-L-seryl-[protein] + diphosphate. It catalyses the reaction L-tyrosyl-[protein] + UTP = O-(5'-uridylyl)-L-tyrosyl-[protein] + diphosphate. Functionally, nucleotidyltransferase involved in the post-translational modification of proteins. It can catalyze the addition of adenosine monophosphate (AMP) or uridine monophosphate (UMP) to a protein, resulting in modifications known as AMPylation and UMPylation. This chain is Protein nucleotidyltransferase YdiU, found in Shewanella baltica (strain OS155 / ATCC BAA-1091).